We begin with the raw amino-acid sequence, 257 residues long: Protein windbeutel (257 aa).

The N-terminal stretch at 1-21 is a signal peptide; that stretch reads MMHILVTLLLVAIHSIPTTWA. A CXXC motif region spans residues 24 to 27; it reads CTGC. Residues 254–257 carry the Prevents secretion from ER motif; sequence KEEL.

As to quaternary structure, homodimer. Interacts with pip; the interaction is direct and does not require pip to be folded. Briefly expressed in the follicle cells of the ovary, at around the time when the dorsoventral axis of the egg chamber is first established.

It is found in the endoplasmic reticulum lumen. Probable chaperone protein involved in dorsoventral axis patterning in early embryos. Probably acts by folding and targeting pipe (pip) into the Golgi. This chain is Protein windbeutel, found in Drosophila melanogaster (Fruit fly).